The following is a 356-amino-acid chain: MSGQEKRLMVMAGGTGGHVFPGLAVAHHLMDQGWQVRWLGTADRMEADLVPKNGIEIDFIRISGLRGKGIKAQLLAPVRIFNAWRQARAIMKRFQPDVVLGMGGYVSGPGGLAAWSLGIPVVLHEQNGIAGLTNKWLAKIAKKVMQAFPGAFPHADVVGNPVRTDVLALPLPGQRLVGRHGPIRVLVVGGSQGARVLNQTMPQVAAKLGDAVTIWHQSGKGGQQTVQQAYAAAGQPQHKVTEFIDDMAAAYAWADVVVCRSGALTVSEIAAAGLPALFVPFQHKDRQQYWNALPLEKAGAAKILEQPEFTVEAVASTLASWDRETLLDMAERARGASIPDATERVAEEVSAVALAR.

Residues 15–17, asparagine 127, arginine 163, serine 191, isoleucine 244, 263–268, and glutamine 288 contribute to the UDP-N-acetyl-alpha-D-glucosamine site; these read TGG and ALTVSE.

This sequence belongs to the glycosyltransferase 28 family. MurG subfamily.

Its subcellular location is the cell inner membrane. The catalysed reaction is di-trans,octa-cis-undecaprenyl diphospho-N-acetyl-alpha-D-muramoyl-L-alanyl-D-glutamyl-meso-2,6-diaminopimeloyl-D-alanyl-D-alanine + UDP-N-acetyl-alpha-D-glucosamine = di-trans,octa-cis-undecaprenyl diphospho-[N-acetyl-alpha-D-glucosaminyl-(1-&gt;4)]-N-acetyl-alpha-D-muramoyl-L-alanyl-D-glutamyl-meso-2,6-diaminopimeloyl-D-alanyl-D-alanine + UDP + H(+). The protein operates within cell wall biogenesis; peptidoglycan biosynthesis. Functionally, cell wall formation. Catalyzes the transfer of a GlcNAc subunit on undecaprenyl-pyrophosphoryl-MurNAc-pentapeptide (lipid intermediate I) to form undecaprenyl-pyrophosphoryl-MurNAc-(pentapeptide)GlcNAc (lipid intermediate II). This is UDP-N-acetylglucosamine--N-acetylmuramyl-(pentapeptide) pyrophosphoryl-undecaprenol N-acetylglucosamine transferase from Klebsiella pneumoniae (strain 342).